We begin with the raw amino-acid sequence, 346 residues long: N-acetyl-gamma-glutamyl-phosphate reductase (346 aa).

The active site involves cysteine 149.

Belongs to the NAGSA dehydrogenase family. Type 1 subfamily.

The protein localises to the cytoplasm. It carries out the reaction N-acetyl-L-glutamate 5-semialdehyde + phosphate + NADP(+) = N-acetyl-L-glutamyl 5-phosphate + NADPH + H(+). Its pathway is amino-acid biosynthesis; L-arginine biosynthesis; N(2)-acetyl-L-ornithine from L-glutamate: step 3/4. Catalyzes the NADPH-dependent reduction of N-acetyl-5-glutamyl phosphate to yield N-acetyl-L-glutamate 5-semialdehyde. This Micrococcus luteus (strain ATCC 4698 / DSM 20030 / JCM 1464 / CCM 169 / CCUG 5858 / IAM 1056 / NBRC 3333 / NCIMB 9278 / NCTC 2665 / VKM Ac-2230) (Micrococcus lysodeikticus) protein is N-acetyl-gamma-glutamyl-phosphate reductase.